A 920-amino-acid chain; its full sequence is Whirlin (920 aa).

Positions leucine 141–arginine 224 constitute a PDZ 1 domain. Residues glutamine 241 to aspartate 262 are disordered. A compositionally biased stretch (polar residues) spans glycine 242 to leucine 257. Residues lysine 278–arginine 360 enclose the PDZ 2 domain. Disordered regions lie at residues methionine 502 to threonine 536, cysteine 561 to aspartate 603, phenylalanine 630 to alanine 730, and arginine 752 to threonine 828. Positions serine 520–threonine 536 are enriched in low complexity. A compositionally biased stretch (polar residues) spans cysteine 561–alanine 570. Pro residues-rich tracts occupy residues isoleucine 589–leucine 598 and arginine 636–glycine 651. Polar residues predominate over residues alanine 655–serine 674. A Phosphoserine modification is found at serine 698. Polar residues-rich tracts occupy residues glutamine 756–glutamate 775 and glutamate 785–asparagine 800. Positions asparagine 802–threonine 813 are enriched in basic and acidic residues. Positions leucine 829–leucine 912 constitute a PDZ 3 domain.

In terms of assembly, forms homooligomers. Interacts (via C-terminal PDZ domain) with MYO15A; this interaction is necessary for localization of WHRN to stereocilia tips. Interacts (via C-terminal PDZ domain) with MPP1/p55. Interacts with LRRC4C/NGL1. Interacts with MYO7A. Interacts with RPGR. Interacts with EPS8. Interacts with CASK. Interacts with CIB2. Component of USH2 complex, composed of ADGRV1, PDZD7, USH2A and WHRN. Interacts (via PDZ domains) with PDZD7; the interaction is direct. Interacts (via N-terminal PDZ domain) with USH2A (via cytoplasmic region). Interacts with ADGRV1/MASS1 (via cytoplasmic region). In terms of tissue distribution, ubiquitous. Highly expressed in heart, spleen, lung and liver. Highly expressed in brain, in the olfactory bulb, thalamus, layers III-V of the cerebral cortex and the molecular layer of cerebellum. Detected in soma and dendrites of thalamic neurons, and in cerebrum in cell bodies and apical dendrites of pyramidal neurons. Expressed in retina and inner ear.

The protein resides in the cytoplasm. Its subcellular location is the cell projection. It localises to the stereocilium. It is found in the growth cone. The protein localises to the synapse. Functionally, involved in hearing and vision as member of the USH2 complex. Necessary for elongation and maintenance of inner and outer hair cell stereocilia in the organ of Corti in the inner ear. Involved in the maintenance of the hair bundle ankle region, which connects stereocilia in cochlear hair cells of the inner ear. In retina photoreceptors, required for the maintenance of periciliary membrane complex that seems to play a role in regulating intracellular protein transport. In Rattus norvegicus (Rat), this protein is Whirlin.